Reading from the N-terminus, the 445-residue chain is Glycine--tRNA ligase (445 aa).

2 residues coordinate substrate: Arg97 and Glu145. Residues 177 to 179 (RNE), 187 to 192 (FRTCEF), 262 to 263 (EV), and 308 to 311 (GLTR) each bind ATP. A substrate-binding site is contributed by 192–196 (FEQME). 304 to 308 (ETSAG) contributes to the substrate binding site.

It belongs to the class-II aminoacyl-tRNA synthetase family. As to quaternary structure, homodimer.

It localises to the cytoplasm. It carries out the reaction tRNA(Gly) + glycine + ATP = glycyl-tRNA(Gly) + AMP + diphosphate. Functionally, catalyzes the attachment of glycine to tRNA(Gly). The polypeptide is Glycine--tRNA ligase (Borrelia garinii subsp. bavariensis (strain ATCC BAA-2496 / DSM 23469 / PBi) (Borreliella bavariensis)).